The sequence spans 734 residues: Photosystem I P700 chlorophyll a apoprotein A2 (734 aa).

The next 8 helical transmembrane spans lie at 46–69 (IFAS…FHVA), 135–158 (LYTG…LHLQ), 175–199 (LNHH…HVAI), 273–291 (MAHH…GHMY), 330–353 (LHFQ…QHMY), 369–395 (SALY…IFFI), 417–439 (ALIS…LYVH), and 517–535 (FLVH…LILV). [4Fe-4S] cluster is bound by residues Cys-559 and Cys-568. 2 helical membrane-spanning segments follow: residues 575–596 (AFYL…YWHW) and 643–665 (LSVW…MFLI). Residues His-654, Met-662, and Tyr-670 each contribute to the chlorophyll a site. Trp-671 is a binding site for phylloquinone. A helical transmembrane segment spans residues 707–727 (LVGLAHFSVGYVFTYAAFVIA).

The protein belongs to the PsaA/PsaB family. The PsaA/B heterodimer binds the P700 chlorophyll special pair and subsequent electron acceptors. PSI consists of a core antenna complex that captures photons, and an electron transfer chain that converts photonic excitation into a charge separation. The eukaryotic PSI reaction center is composed of at least 11 subunits. Requires P700 is a chlorophyll a/chlorophyll a' dimer, A0 is one or more chlorophyll a, A1 is one or both phylloquinones and FX is a shared 4Fe-4S iron-sulfur center. as cofactor.

Its subcellular location is the plastid. It localises to the chloroplast thylakoid membrane. It carries out the reaction reduced [plastocyanin] + hnu + oxidized [2Fe-2S]-[ferredoxin] = oxidized [plastocyanin] + reduced [2Fe-2S]-[ferredoxin]. PsaA and PsaB bind P700, the primary electron donor of photosystem I (PSI), as well as the electron acceptors A0, A1 and FX. PSI is a plastocyanin/cytochrome c6-ferredoxin oxidoreductase, converting photonic excitation into a charge separation, which transfers an electron from the donor P700 chlorophyll pair to the spectroscopically characterized acceptors A0, A1, FX, FA and FB in turn. Oxidized P700 is reduced on the lumenal side of the thylakoid membrane by plastocyanin or cytochrome c6. This Nephroselmis olivacea (Green alga) protein is Photosystem I P700 chlorophyll a apoprotein A2.